A 1883-amino-acid polypeptide reads, in one-letter code: Chromodomain-helicase-DNA-binding protein 1 (1883 aa).

The segment covering Met-1–Ser-14 has biased composition (polar residues). The tract at residues Met-1–Asp-293 is disordered. The segment covering Ser-39 to Arg-56 has biased composition (low complexity). Positions Gln-114–Leu-128 are enriched in polar residues. Positions Asp-159–Ser-172 are enriched in low complexity. A compositionally biased stretch (acidic residues) spans Ser-213 to Val-226. Polar residues predominate over residues Ala-236–Gln-247. A compositionally biased stretch (acidic residues) spans Ser-284 to Asp-293. Chromo domains follow at residues Glu-318–Arg-414 and Asn-439–Arg-501. Residues Leu-540–Asp-710 enclose the Helicase ATP-binding domain. Asp-553–Thr-560 lines the ATP pocket. The DEAH box motif lies at Asp-661–His-664. The Helicase C-terminal domain occupies Leu-840–Thr-991. Disordered regions lie at residues Phe-1074–Lys-1185, His-1246–Arg-1265, Thr-1390–Thr-1491, Lys-1599–Ser-1829, and Pro-1848–Thr-1883. Residues Gly-1091–Ile-1103 show a composition bias toward acidic residues. A compositionally biased stretch (basic and acidic residues) spans Gly-1106–Glu-1121. The span at Gly-1393–Ala-1402 shows a compositional bias: basic residues. A compositionally biased stretch (polar residues) spans Ala-1437–Pro-1451. Basic residues predominate over residues Lys-1466 to Lys-1476. Residues Leu-1505 to Ala-1606 form a CHD1 helical C-terminal domain (CHCT) region. Positions Ala-1600–Gly-1612 are enriched in basic and acidic residues. The segment covering Ser-1613–Pro-1622 has biased composition (low complexity). The segment covering Thr-1627–Gly-1638 has biased composition (basic and acidic residues). The span at Tyr-1724–Glu-1738 shows a compositional bias: gly residues. Residues Asn-1742 to Arg-1755 are compositionally biased toward polar residues. Composition is skewed to basic and acidic residues over residues Glu-1773 to Gly-1794, Tyr-1805 to Arg-1817, and Tyr-1868 to Thr-1883.

It belongs to the SNF2/RAD54 helicase family. As to quaternary structure, monomer. Component of the SAGA complex. Interacts with SSRP1.

It is found in the nucleus. Its subcellular location is the chromosome. It carries out the reaction ATP + H2O = ADP + phosphate + H(+). ATP-dependent chromatin-remodeling factor which functions as substrate recognition component of the transcription regulatory histone acetylation (HAT) complex SAGA. Regulates polymerase II transcription. Also required for efficient transcription by RNA polymerase I, and more specifically the polymerase I transcription termination step. Regulates negatively DNA replication. Not only involved in transcription-related chromatin remodeling, but also required to maintain a specific chromatin configuration across the genome. Involved in assembly of active chromatin. Required for maintaining open chromatin and pluripotency in embryonic stem cells and is important for wing development and fertility. Is essential for the incorporation of histone H3.3 and assembly of paternal chromatin. Required for replication-independent nucleosome assembly in the decondensing male pronucleus. This is Chromodomain-helicase-DNA-binding protein 1 (Chd1) from Drosophila melanogaster (Fruit fly).